We begin with the raw amino-acid sequence, 712 residues long: Copper amine oxidase 1 (712 aa).

319 to 330 (AFDLGEYGAGYL) is a substrate binding site. The Proton acceptor role is filled by D321. C340 and C366 are oxidised to a cystine. 404 to 409 (AANYEY) provides a ligand contact to substrate. Y407 acts as the Schiff-base intermediate with substrate; via topaquinone in catalysis. Position 407 is a 2',4',5'-topaquinone (Y407). Residues H458 and H460 each contribute to the Cu cation site. The Mn(2+) site is built by D616 and I617. Cu cation is bound at residue H627.

This sequence belongs to the copper/topaquinone oxidase family. As to quaternary structure, homodimer. Requires Cu cation as cofactor. The cofactor is Zn(2+). L-topaquinone is required as a cofactor. Mn(2+) serves as cofactor. Topaquinone (TPQ) is generated by copper-dependent autoxidation of a specific tyrosyl residue.

The protein resides in the cytoplasm. It carries out the reaction a primary methyl amine + O2 + H2O = an aldehyde + H2O2 + NH4(+). Functionally, copper amine oxidase involved in the metabolism of xenobiotic and biogenic amines. Capable of catalyzing the oxidative deamination of primary amines such as ethylamine as alternate sources of nitrogen to support growth. The chain is Copper amine oxidase 1 (cao1) from Schizosaccharomyces pombe (strain 972 / ATCC 24843) (Fission yeast).